Reading from the N-terminus, the 967-residue chain is Leucine-rich repeat receptor-like protein kinase PXC2 (967 aa).

Residues 1–20 (MFNGAVSLLFLFLAVVSARA) form the signal peptide. Topologically, residues 21 to 609 (DPTFNDDVLG…QIRKSVLSIS (589 aa)) are extracellular. 11 LRR repeats span residues 91 to 114 (LQFLHTLVLSNNNLTGTLNPEFPH), 115 to 139 (LGSLQVVDFSGNNLSGRIPDGFFEQ), 141 to 164 (GSLRSVSLANNKLTGSIPVSLSYC), 165 to 189 (STLTHLNLSSNQLSGRLPRDIWFLK), 191 to 212 (LKSLDFSHNFLQGDIPDGLGGL), 214 to 236 (DLRHINLSRNWFSGDVPSDIGRC), 237 to 260 (SSLKSLDLSENYFSGNLPDSMKSL), 262 to 284 (SCSSIRLRGNSLIGEIPDWIGDI), 285 to 307 (ATLEILDLSANNFTGTVPFSLGN), 308 to 332 (LEFLKDLNLSANMLAGELPQTLSNC), and 334 to 356 (NLISIDVSKNSFTGDVLKWMFTG). Asn103 and Asn127 each carry an N-linked (GlcNAc...) asparagine glycan. A glycan (N-linked (GlcNAc...) asparagine) is linked at Asn171. A glycan (N-linked (GlcNAc...) asparagine) is linked at Asn219. Asn296, Asn315, and Asn331 each carry an N-linked (GlcNAc...) asparagine glycan. An N-linked (GlcNAc...) asparagine glycan is attached at Asn374. LRR repeat units follow at residues 384–408 (LQGLRVLDLSSNGFTGELPSNIWIL), 410–432 (SLLQLNMSTNSLFGSIPTGIGGL), 433–456 (KVAEILDLSSNLLNGTLPSEIGGA), 457–480 (VSLKQLHLHRNRLSGQIPAKISNC), 482–503 (ALNTINLSENELSGAIPGSIGS), 504–528 (LSNLEYIDLSRNNLSGSLPKEIEKL), and 530–552 (HLLTFNISHNNITGELPAGGFFN). 9 N-linked (GlcNAc...) asparagine glycosylation sites follow: Asn415, Asn446, Asn479, Asn487, Asn516, Asn535, Asn540, Asn571, and Asn587. A helical membrane pass occupies residues 610 to 630 (ALIAIGAAAVIAIGVVAVTLL). The Cytoplasmic segment spans residues 631 to 967 (NVHARSSVSR…LIQCPSHDLE (337 aa)). Residues 687–959 (LNKDSELGRG…EEVVKILELI (273 aa)) enclose the Protein kinase domain. Residues 693–701 (LGRGGFGVV) and Lys715 contribute to the ATP site.

This sequence belongs to the protein kinase superfamily. Ser/Thr protein kinase family. As to expression, expressed in the vascular strands of cotyledons, the shoot apex, hypocotyls, roots, leaves, stems and flowers.

Its subcellular location is the cell membrane. Its function is as follows. Leucine-rich repeat receptor-like protein kinase that may play a role in vascular tissues development. This is Leucine-rich repeat receptor-like protein kinase PXC2 from Arabidopsis thaliana (Mouse-ear cress).